We begin with the raw amino-acid sequence, 339 residues long: Methionyl-tRNA formyltransferase (339 aa).

110 to 113 (SLLP) is a (6S)-5,6,7,8-tetrahydrofolate binding site.

The protein belongs to the Fmt family.

The enzyme catalyses L-methionyl-tRNA(fMet) + (6R)-10-formyltetrahydrofolate = N-formyl-L-methionyl-tRNA(fMet) + (6S)-5,6,7,8-tetrahydrofolate + H(+). Its function is as follows. Attaches a formyl group to the free amino group of methionyl-tRNA(fMet). The formyl group appears to play a dual role in the initiator identity of N-formylmethionyl-tRNA by promoting its recognition by IF2 and preventing the misappropriation of this tRNA by the elongation apparatus. This Prochlorococcus marinus (strain SARG / CCMP1375 / SS120) protein is Methionyl-tRNA formyltransferase.